The following is a 500-amino-acid chain: Cytochrome P450 CYP736A12 (500 aa).

A helical membrane pass occupies residues 4–24; sequence LAYPLLFVLLGALSWWILPII. Cys-442 is a heme binding site.

Belongs to the cytochrome P450 family. Heme serves as cofactor.

Its subcellular location is the membrane. Probable heme-thiolate monooxygenase. The sequence is that of Cytochrome P450 CYP736A12 from Panax ginseng (Korean ginseng).